A 597-amino-acid polypeptide reads, in one-letter code: Elongation factor 4 (597 aa).

The tr-type G domain occupies 2–184 (KNIRNFSIIA…TVVQKIPAPK (183 aa)). GTP-binding positions include 14–19 (DHGKST) and 131–134 (NKID).

Belongs to the TRAFAC class translation factor GTPase superfamily. Classic translation factor GTPase family. LepA subfamily.

It localises to the cell inner membrane. The enzyme catalyses GTP + H2O = GDP + phosphate + H(+). In terms of biological role, required for accurate and efficient protein synthesis under certain stress conditions. May act as a fidelity factor of the translation reaction, by catalyzing a one-codon backward translocation of tRNAs on improperly translocated ribosomes. Back-translocation proceeds from a post-translocation (POST) complex to a pre-translocation (PRE) complex, thus giving elongation factor G a second chance to translocate the tRNAs correctly. Binds to ribosomes in a GTP-dependent manner. The sequence is that of Elongation factor 4 from Laribacter hongkongensis (strain HLHK9).